The following is a 215-amino-acid chain: MAIGLIGRKVGMTRVFTDEGASIPVTVIEATPNRISQVKTLEQDGYQAVQVTVGERRPARVTSSLKGHFAKANVEPGRKLQEFRFGAEEGRDIKASGELKVDLFEVGQKVDVTGITRGRGFAGVVRRYHFGGGDASHGNSLSHRAPGSIGQCQTPGRVFKGKKMAGQMGNVRRTVQNLELVRIDEGRQLLLIKGAIPGAPGGDVIVKPAVKTVVK.

Gln153 carries the post-translational modification N5-methylglutamine.

It belongs to the universal ribosomal protein uL3 family. As to quaternary structure, part of the 50S ribosomal subunit. Forms a cluster with proteins L14 and L19. Post-translationally, methylated by PrmB.

In terms of biological role, one of the primary rRNA binding proteins, it binds directly near the 3'-end of the 23S rRNA, where it nucleates assembly of the 50S subunit. In Nitrosococcus oceani (strain ATCC 19707 / BCRC 17464 / JCM 30415 / NCIMB 11848 / C-107), this protein is Large ribosomal subunit protein uL3.